A 414-amino-acid polypeptide reads, in one-letter code: Serine hydroxymethyltransferase (414 aa).

Residues Leu-121 and 125–127 (GHL) contribute to the (6S)-5,6,7,8-tetrahydrofolate site. Lys-229 carries the N6-(pyridoxal phosphate)lysine modification.

The protein belongs to the SHMT family. Homodimer. The cofactor is pyridoxal 5'-phosphate.

The protein resides in the cytoplasm. The enzyme catalyses (6R)-5,10-methylene-5,6,7,8-tetrahydrofolate + glycine + H2O = (6S)-5,6,7,8-tetrahydrofolate + L-serine. It participates in one-carbon metabolism; tetrahydrofolate interconversion. It functions in the pathway amino-acid biosynthesis; glycine biosynthesis; glycine from L-serine: step 1/1. Its function is as follows. Catalyzes the reversible interconversion of serine and glycine with tetrahydrofolate (THF) serving as the one-carbon carrier. This reaction serves as the major source of one-carbon groups required for the biosynthesis of purines, thymidylate, methionine, and other important biomolecules. Also exhibits THF-independent aldolase activity toward beta-hydroxyamino acids, producing glycine and aldehydes, via a retro-aldol mechanism. This chain is Serine hydroxymethyltransferase, found in Polaromonas naphthalenivorans (strain CJ2).